Reading from the N-terminus, the 112-residue chain is Glutaredoxin-C6 (112 aa).

Residues 3–103 (LAKAKETVAS…PLLTEAGAIA (101 aa)) form the Glutaredoxin domain. An intrachain disulfide couples Cys23 to Cys26.

The protein belongs to the glutaredoxin family. CPYC subfamily. The N-terminus is blocked. Expressed in aleurone layer.

The protein resides in the cytoplasm. Functionally, has a glutathione-disulfide oxidoreductase activity in the presence of NADPH and glutathione reductase. Reduces low molecular weight disulfides and proteins. Possesses thioltransferase, dehydroascorbate reductase and GSH-dependent peroxidase activities in vitro. The polypeptide is Glutaredoxin-C6 (GRXC6) (Oryza sativa subsp. japonica (Rice)).